We begin with the raw amino-acid sequence, 393 residues long: Bone morphogenetic protein 2 (393 aa).

A signal peptide spans methionine 1 to glycine 19. Residues glycine 20 to arginine 279 constitute a propeptide, cleaved by PCSK5. Serine 85 is modified (phosphoserine). Residues asparagine 133, asparagine 161, and asparagine 197 are each glycosylated (N-linked (GlcNAc...) asparagine). The tract at residues glycine 268–lysine 290 is disordered. Residues histidine 271–lysine 290 are compositionally biased toward basic residues. Intrachain disulfides connect cysteine 293–cysteine 358, cysteine 322–cysteine 390, and cysteine 326–cysteine 392. The N-linked (GlcNAc...) asparagine glycan is linked to asparagine 335.

The protein belongs to the TGF-beta family. In terms of assembly, homodimer; disulfide-linked. Interacts with SOSTDC1. Interacts with GREM2, RGMA, RGMB and RGMC. Interacts with ASPN. Interacts with MAFP5. Interacts with FBN1 (via N-terminal domain) and FBN2. Interacts with type I receptor BMPR1A. Interacts with type II receptor BMPR2. Interacts with SCUBE3. Interacts with TNFAIP6 (primarily via Link domain); this interaction is inhibited by hyaluronan. Interacts with ERFE. Interacts with BMPR1A/ALK3; the interaction may induce HAMP expression. Forms heterodimers with BMP6 in vitro; the heterodimer then binds to its receptor BMPR1A /ALK3 and may induce HAMP expression. Interacts with TGFBR3. As to expression, expressed in femur, calvaria, trachea, lung and ovary.

Its subcellular location is the secreted. Functionally, growth factor of the TGF-beta superfamily that plays essential roles in many developmental processes, including cardiogenesis, neurogenesis, and osteogenesis. Induces cartilage and bone formation. Initiates the canonical BMP signaling cascade by associating with type I receptor BMPR1A and type II receptor BMPR2. Once all three components are bound together in a complex at the cell surface, BMPR2 phosphorylates and activates BMPR1A. In turn, BMPR1A propagates signal by phosphorylating SMAD1/5/8 that travel to the nucleus and act as activators and repressors of transcription of target genes. Also acts to promote expression of HAMP, via the interaction with its receptor BMPR1A/ALK3. Can also signal through non-canonical pathways such as ERK/MAP kinase signaling cascade that regulates osteoblast differentiation. Also stimulates the differentiation of myoblasts into osteoblasts via the EIF2AK3-EIF2A-ATF4 pathway by stimulating EIF2A phosphorylation which leads to increased expression of ATF4 which plays a central role in osteoblast differentiation. Acts as a positive regulator of odontoblast differentiation during mesenchymal tooth germ formation, expression is repressed during the bell stage by MSX1-mediated inhibition of CTNNB1 signaling. This Rattus norvegicus (Rat) protein is Bone morphogenetic protein 2 (Bmp2).